Reading from the N-terminus, the 449-residue chain is Glycine receptor subunit alpha-2 (449 aa).

A signal peptide spans 1–27 (MTRPSVKLLTTLLACLMEMLNFRVSSG). The Extracellular portion of the chain corresponds to 28-255 (KDPDLLSSSS…FHLERQMGYY (228 aa)). N-linked (GlcNAc...) asparagine glycosylation occurs at asparagine 70. The glycine site is built by arginine 97 and serine 161. Arginine 97 is a strychnine binding site. A disulfide bond links cysteine 170 and cysteine 184. The Zn(2+) site is built by glutamate 224 and aspartate 226. Cysteine 230 and cysteine 241 form a disulfide bridge. Residue threonine 236 coordinates glycine. Histidine 247 contributes to the Zn(2+) binding site. The chain crosses the membrane as a helical span at residues 256–276 (LIQMYIPSLLIVILSWVSFWI). Over 277–282 (NMDAAP) the chain is Cytoplasmic. A helical transmembrane segment spans residues 283 to 302 (ARVALGITTVLTMTTQSSGS). The Extracellular portion of the chain corresponds to 303-313 (RASLPKVSYVK). The chain crosses the membrane as a helical span at residues 314-334 (AIDIWMAVCLLFVFAALLEYA). The Cytoplasmic segment spans residues 335 to 420 (GVNFVSRQQK…RAKRIDTISR (86 aa)). A helical transmembrane segment spans residues 421–441 (AAFPLAFLIFNVFYWITYKII). At 442-449 (RHESARKD) the chain is on the extracellular side.

This sequence belongs to the ligand-gated ion channel (TC 1.A.9) family.

The protein localises to the postsynaptic cell membrane. It localises to the synapse. The protein resides in the cell membrane. It is found in the cell projection. It carries out the reaction chloride(in) = chloride(out). Channel opening is triggered by extracellular glycine. Channel opening is also triggered by taurine and beta-alanine. Inhibited by strychnine. Its function is as follows. Subunit of heteromeric glycine-gated chloride channels. Plays a role in synaptic plasticity. Contributes to the generation of inhibitory postsynaptic currents, and is involved in the down-regulation of neuronal excitability. This chain is Glycine receptor subunit alpha-2 (glra2), found in Danio rerio (Zebrafish).